The sequence spans 279 residues: Early nodulin-like protein 18 (279 aa).

An N-terminal signal peptide occupies residues 1-24 (MAGAVATVSVGLAWLGLMAAAASA). The Phytocyanin domain occupies 25-133 (TQFRVGGGRG…GEKLVVVVMA (109 aa)). C82 and C121 form a disulfide bridge. The N-linked (GlcNAc...) asparagine glycan is linked to N83. Positions 138-256 (RHAPPPSPPA…ANDRSGAAAA (119 aa)) are disordered. The span at 140 to 168 (APPPSPPAVPPPVAPVPMPSPASSPPSPA) shows a compositional bias: pro residues. Positions 169 to 185 (PAAATPSLAPSPVATTP) are enriched in low complexity. The segment covering 186–199 (SPSPSVSPMAPAPA) has biased composition (pro residues). 2 stretches are compositionally biased toward low complexity: residues 212–226 (AAMA…GGVA) and 234–256 (TDGA…AAAA). N238 is a glycosylation site (N-linked (GlcNAc...) asparagine). S251 carries the GPI-anchor amidated serine lipid modification. A propeptide spans 252–279 (GAAAAAPVVAGVVVTSLGAYIGYAMLAI) (removed in mature form).

This sequence belongs to the early nodulin-like (ENODL) family. As to expression, specifically expressed in reproductive tissues. Mainly observed in developing seeds and in mature leaves.

It is found in the cell membrane. May act as a carbohydrate transporter. Promotes tolerance to salt stress in a redox-dependent manner. This Oryza sativa subsp. japonica (Rice) protein is Early nodulin-like protein 18.